Consider the following 525-residue polypeptide: Mitoguardin (525 aa).

A helical membrane pass occupies residues 26 to 45; the sequence is VVLFSLTAGVALMSVLSRFL. The span at 47 to 67 shows a compositional bias: basic residues; it reads RRKPPRPPRRARKYTGRRNRN. 2 disordered regions span residues 47–73 and 210–239; these read RRKPPRPPRRARKYTGRRNRNSMRSPN and DEAEEEAGEADDDRRSRKSGSVLSRAGSDP. Over residues 211–220 the composition is skewed to acidic residues; it reads EAEEEAGEAD.

This sequence belongs to the mitoguardin family. In terms of assembly, interacts with zuc.

It is found in the mitochondrion outer membrane. Its function is as follows. Regulator of mitochondrial fusion required to maintain neuronal homeostasis. This Drosophila melanogaster (Fruit fly) protein is Mitoguardin.